A 247-amino-acid polypeptide reads, in one-letter code: Probable chemoreceptor glutamine deamidase CheD (247 aa).

A disordered region spans residues 204-247 (KRPAAPQPARPRIELFGGRGTAPGAGSPSAGSPYAANLSRKQEA). Residues 227 to 239 (GAGSPSAGSPYAA) show a composition bias toward low complexity.

This sequence belongs to the CheD family.

It carries out the reaction L-glutaminyl-[protein] + H2O = L-glutamyl-[protein] + NH4(+). In terms of biological role, probably deamidates glutamine residues to glutamate on methyl-accepting chemotaxis receptors (MCPs), playing an important role in chemotaxis. This Burkholderia orbicola (strain AU 1054) protein is Probable chemoreceptor glutamine deamidase CheD.